A 707-amino-acid polypeptide reads, in one-letter code: Bone morphogenetic protein 1 (707 aa).

A disordered region spans residues 57-90 (SGAATNISRPEKGRRTRKERRRSREKRASTSRPE). An N-linked (GlcNAc...) asparagine glycan is attached at asparagine 62. Residues 68–81 (KGRRTRKERRRSRE) show a composition bias toward basic residues. The 200-residue stretch at 84 to 283 (ASTSRPERVW…AQARKLYKCP (200 aa)) folds into the Peptidase M12A domain. An N-linked (GlcNAc...) asparagine glycan is attached at asparagine 105. 4 disulfides stabilise this stretch: cysteine 126/cysteine 282, cysteine 146/cysteine 168, cysteine 148/cysteine 149, and cysteine 285/cysteine 311. Histidine 176 contacts Zn(2+). Residue glutamate 177 is part of the active site. Residues histidine 180 and histidine 186 each coordinate Zn(2+). CUB domains lie at 285–397 (CGET…YEAL) and 398–509 (CGGE…NYFK). 2 N-linked (GlcNAc...) asparagine glycosylation sites follow: asparagine 295 and asparagine 326. 8 disulfides stabilise this stretch: cysteine 338–cysteine 360, cysteine 398–cysteine 424, cysteine 451–cysteine 473, cysteine 514–cysteine 526, cysteine 522–cysteine 535, cysteine 537–cysteine 550, cysteine 554–cysteine 580, and cysteine 607–cysteine 629. The EGF-like; calcium-binding domain maps to 510–551 (EVDECSRPNNGGCEQRCVNTLGSYKCACDPGYELGQDKKSCE). Residues 554–666 (CGGFLTKLNG…KGFQANFFSE (113 aa)) enclose the CUB 3 domain. A glycan (N-linked (GlcNAc...) asparagine) is linked at asparagine 562. A disordered region spans residues 682 to 707 (RGQQNQAPKRVRPRMRLRTVKKTRPP). The span at 690–707 (KRVRPRMRLRTVKKTRPP) shows a compositional bias: basic residues.

As to quaternary structure, interacts with olfml3/ont1. Requires Zn(2+) as cofactor. Post-translationally, proteolytically activated in the trans-Golgi network by furin-like/paired basic proprotein convertases, cleavage is not required for secretion.

It localises to the golgi apparatus. The protein localises to the trans-Golgi network. The protein resides in the secreted. Its subcellular location is the extracellular space. It is found in the extracellular matrix. In terms of biological role, metalloprotease involved in pattern formation in gastrula and later differentiation of developing organs. Able to cleave chordin (chrd), suggesting that it may act in dorsoventral patterning during early development by regulating the chordin (chrd) activity. In Xenopus laevis (African clawed frog), this protein is Bone morphogenetic protein 1 (bmp1).